A 95-amino-acid chain; its full sequence is Small ribosomal subunit protein bS16 (95 aa).

It belongs to the bacterial ribosomal protein bS16 family.

This is Small ribosomal subunit protein bS16 from Roseiflexus sp. (strain RS-1).